We begin with the raw amino-acid sequence, 688 residues long: Elongation factor G (688 aa).

Residues 8–282 form the tr-type G domain; sequence EKFRNFGIMA…GVVDYLPSPL (275 aa). Residues 17–24, 81–85, and 135–138 each bind GTP; these read AHIDAGKT, DTPGH, and NKMD.

Belongs to the TRAFAC class translation factor GTPase superfamily. Classic translation factor GTPase family. EF-G/EF-2 subfamily.

Its subcellular location is the cytoplasm. Catalyzes the GTP-dependent ribosomal translocation step during translation elongation. During this step, the ribosome changes from the pre-translocational (PRE) to the post-translocational (POST) state as the newly formed A-site-bound peptidyl-tRNA and P-site-bound deacylated tRNA move to the P and E sites, respectively. Catalyzes the coordinated movement of the two tRNA molecules, the mRNA and conformational changes in the ribosome. The polypeptide is Elongation factor G (Clostridium perfringens (strain 13 / Type A)).